The following is a 376-amino-acid chain: MTRASSFRLDATSGKARTGVIQTPRGDIRTPAFMPVGTAATVKAMMPESVAATGADILLGNTYHLMLRPTAERIANLGGLHSFMNWDKPILTDSGGFQVMSLADLRKLTEEGVTFRSHIDGSKHLLSPERSMEIQKLLGSDIVMCFDECPALPADRKALDDSMRLSMRWAARSKEAFGDRPGYALFGIQQGGLEEDLREESAKALREIGFDGYAVGGLAVGEGQAAMFGCLDFAPDQLPTDKPRYLMGVGKPDDIVGAVKRGIDMMDCVLPSRSGRTGQAWTRRGQVNIKNARHADDPRPLDEDCTCPACRNYSRAYLHHVFRAQEMISGMLLTWHNLHYYQELMQTMRDAIAANDFAGFEARFHADRAEGDIVPL.

The Proton acceptor role is filled by D93. Residues 93 to 97 (DSGGF), D147, Q190, and G217 each bind substrate. Positions 248–254 (GVGKPDD) are RNA binding. D267 serves as the catalytic Nucleophile. Residues C305, C307, C310, and H336 each coordinate Zn(2+).

It belongs to the queuine tRNA-ribosyltransferase family. Homodimer. Within each dimer, one monomer is responsible for RNA recognition and catalysis, while the other monomer binds to the replacement base PreQ1. Zn(2+) is required as a cofactor.

It carries out the reaction 7-aminomethyl-7-carbaguanine + guanosine(34) in tRNA = 7-aminomethyl-7-carbaguanosine(34) in tRNA + guanine. It functions in the pathway tRNA modification; tRNA-queuosine biosynthesis. Catalyzes the base-exchange of a guanine (G) residue with the queuine precursor 7-aminomethyl-7-deazaguanine (PreQ1) at position 34 (anticodon wobble position) in tRNAs with GU(N) anticodons (tRNA-Asp, -Asn, -His and -Tyr). Catalysis occurs through a double-displacement mechanism. The nucleophile active site attacks the C1' of nucleotide 34 to detach the guanine base from the RNA, forming a covalent enzyme-RNA intermediate. The proton acceptor active site deprotonates the incoming PreQ1, allowing a nucleophilic attack on the C1' of the ribose to form the product. After dissociation, two additional enzymatic reactions on the tRNA convert PreQ1 to queuine (Q), resulting in the hypermodified nucleoside queuosine (7-(((4,5-cis-dihydroxy-2-cyclopenten-1-yl)amino)methyl)-7-deazaguanosine). This is Queuine tRNA-ribosyltransferase from Jannaschia sp. (strain CCS1).